A 405-amino-acid chain; its full sequence is Acetylornithine/succinyldiaminopimelate aminotransferase (405 aa).

Pyridoxal 5'-phosphate is bound by residues 107–108 (GA) and F140. R143 lines the N(2)-acetyl-L-ornithine pocket. Position 225-228 (225-228 (DEVQ)) interacts with pyridoxal 5'-phosphate. K254 carries the N6-(pyridoxal phosphate)lysine modification. N(2)-acetyl-L-ornithine is bound at residue T282. T283 is a binding site for pyridoxal 5'-phosphate.

Belongs to the class-III pyridoxal-phosphate-dependent aminotransferase family. ArgD subfamily. As to quaternary structure, homodimer. Pyridoxal 5'-phosphate is required as a cofactor.

It is found in the cytoplasm. The enzyme catalyses N(2)-acetyl-L-ornithine + 2-oxoglutarate = N-acetyl-L-glutamate 5-semialdehyde + L-glutamate. The catalysed reaction is N-succinyl-(2S,6S)-2,6-diaminopimelate + 2-oxoglutarate = (S)-2-succinylamino-6-oxoheptanedioate + L-glutamate. Its pathway is amino-acid biosynthesis; L-arginine biosynthesis; N(2)-acetyl-L-ornithine from L-glutamate: step 4/4. The protein operates within amino-acid biosynthesis; L-lysine biosynthesis via DAP pathway; LL-2,6-diaminopimelate from (S)-tetrahydrodipicolinate (succinylase route): step 2/3. Functionally, involved in both the arginine and lysine biosynthetic pathways. The protein is Acetylornithine/succinyldiaminopimelate aminotransferase of Yersinia pestis.